A 583-amino-acid polypeptide reads, in one-letter code: Ribosomal lysine N-methyltransferase 1 (583 aa).

An SET domain is found at 22–274; the sequence is EELKFLYTDL…QSRELSNNYG (253 aa). An S-adenosyl-L-methionine-binding site is contributed by Y273. Coiled coils occupy residues 378–407 and 433–459; these read KAEE…KLNS and KGQK…ENKH.

It belongs to the class V-like SAM-binding methyltransferase superfamily. RKM1 family.

The protein resides in the cytoplasm. It localises to the nucleus. Its function is as follows. S-adenosyl-L-methionine-dependent protein-lysine N-methyltransferase that monomethylates ribosomal protein S18 (RPS18A and RPS18B) at 'Lys-48' and dimethylates ribosomal protein L23 (RPL23A and RPL23B) at 'Lys-106' and 'Lys-110'. The chain is Ribosomal lysine N-methyltransferase 1 from Saccharomyces cerevisiae (strain ATCC 204508 / S288c) (Baker's yeast).